Consider the following 484-residue polypeptide: Protein nucleotidyltransferase YdiU (484 aa).

ATP contacts are provided by glycine 81, glycine 83, arginine 84, lysine 103, aspartate 115, glycine 116, arginine 166, and arginine 173. Residue aspartate 244 is the Proton acceptor of the active site. Residues asparagine 245 and aspartate 254 each contribute to the Mg(2+) site. Aspartate 254 contacts ATP.

Belongs to the SELO family. The cofactor is Mg(2+). It depends on Mn(2+) as a cofactor.

It catalyses the reaction L-seryl-[protein] + ATP = 3-O-(5'-adenylyl)-L-seryl-[protein] + diphosphate. It carries out the reaction L-threonyl-[protein] + ATP = 3-O-(5'-adenylyl)-L-threonyl-[protein] + diphosphate. The enzyme catalyses L-tyrosyl-[protein] + ATP = O-(5'-adenylyl)-L-tyrosyl-[protein] + diphosphate. The catalysed reaction is L-histidyl-[protein] + UTP = N(tele)-(5'-uridylyl)-L-histidyl-[protein] + diphosphate. It catalyses the reaction L-seryl-[protein] + UTP = O-(5'-uridylyl)-L-seryl-[protein] + diphosphate. It carries out the reaction L-tyrosyl-[protein] + UTP = O-(5'-uridylyl)-L-tyrosyl-[protein] + diphosphate. In terms of biological role, nucleotidyltransferase involved in the post-translational modification of proteins. It can catalyze the addition of adenosine monophosphate (AMP) or uridine monophosphate (UMP) to a protein, resulting in modifications known as AMPylation and UMPylation. The protein is Protein nucleotidyltransferase YdiU of Shewanella sp. (strain MR-4).